Here is a 555-residue protein sequence, read N- to C-terminus: MFS-type transporter VdtG (555 aa).

The segment at 1–20 (MNGNGTADKPGPPGGKPFGP) is disordered. N4 is a glycosylation site (N-linked (GlcNAc...) asparagine). The next 3 membrane-spanning stretches (helical) occupy residues 30 to 50 (TGFKLYSIMTGLYLASFLTAL), 71 to 91 (DIGWYGSAYLLTFCAFQLLFG), and 101 to 121 (WVFLSAVLIFEIGSAICGAAP). N122 is a glycosylation site (N-linked (GlcNAc...) asparagine). The next 2 membrane-spanning stretches (helical) occupy residues 132–152 (IAGLGSSGIFGGSVIITFFTV) and 162–182 (GIAGVIFALASSVGPLIGGGF). Residue N185 is glycosylated (N-linked (GlcNAc...) asparagine). A run of 4 helical transmembrane segments spans residues 190–210 (WCFYINLPVGALTVVTILLFL), 232–252 (LGNLCLIPGIICLLLAIQWGG), 262–282 (IVALLVLAGVLLIAFVGVQLW), and 304–324 (AFTICVTAGFMSFNYYLPIWF). N329 is a glycosylation site (N-linked (GlcNAc...) asparagine). Helical transmembrane passes span 337–357 (VMMLPTVISSGVASLACGFII), 364–384 (TPFMIGGSVLMAIGAGLLTTF), 393–413 (WIGYQVLWALGCGMSMQQASL), 425–445 (PIGISLIFFSQSLGGSVFLAV), and 497–517 (LMDVFRVAVASSCACVVAAAF). Residues 528–555 (AAGPGGPGGPGGPGGPGGPEGLRGGNKV) are disordered. Positions 530 to 555 (GPGGPGGPGGPGGPGGPEGLRGGNKV) are enriched in gly residues.

Belongs to the major facilitator superfamily. TCR/Tet family.

It localises to the endoplasmic reticulum membrane. Its function is as follows. MFS-type transporter; part of the gene cluster that mediates the biosynthesis of viriditoxin, one of the 'classical' secondary metabolites produced by fungi and that has antibacterial activity. Is not essential for viriditoxin production. This is MFS-type transporter VdtG from Byssochlamys spectabilis (Paecilomyces variotii).